Reading from the N-terminus, the 475-residue chain is Ribulose bisphosphate carboxylase large chain (475 aa).

The propeptide occupies 1–2 (MS). P3 is modified (N-acetylproline). K14 carries the N6,N6,N6-trimethyllysine modification. Positions 123 and 173 each coordinate substrate. K175 serves as the catalytic Proton acceptor. K177 serves as a coordination point for substrate. K201, D203, and E204 together coordinate Mg(2+). N6-carboxylysine is present on K201. The active-site Proton acceptor is H294. 3 residues coordinate substrate: R295, H327, and S379.

It belongs to the RuBisCO large chain family. Type I subfamily. As to quaternary structure, heterohexadecamer of 8 large chains and 8 small chains; disulfide-linked. The disulfide link is formed within the large subunit homodimers. Mg(2+) is required as a cofactor. Post-translationally, the disulfide bond which can form in the large chain dimeric partners within the hexadecamer appears to be associated with oxidative stress and protein turnover.

Its subcellular location is the plastid. The protein resides in the chloroplast. It carries out the reaction 2 (2R)-3-phosphoglycerate + 2 H(+) = D-ribulose 1,5-bisphosphate + CO2 + H2O. It catalyses the reaction D-ribulose 1,5-bisphosphate + O2 = 2-phosphoglycolate + (2R)-3-phosphoglycerate + 2 H(+). Functionally, ruBisCO catalyzes two reactions: the carboxylation of D-ribulose 1,5-bisphosphate, the primary event in carbon dioxide fixation, as well as the oxidative fragmentation of the pentose substrate in the photorespiration process. Both reactions occur simultaneously and in competition at the same active site. In Vitis vinifera (Grape), this protein is Ribulose bisphosphate carboxylase large chain.